Here is a 358-residue protein sequence, read N- to C-terminus: Protein ttm-2 (358 aa).

Belongs to the arrestin family.

Its function is as follows. Involved in resistance to B.thuringiensis pore-forming toxin Cry5B downstream of the sek-1 and pmk-1 MAPK kinase pathway. In Caenorhabditis elegans, this protein is Protein ttm-2.